The following is a 688-amino-acid chain: Glycine--tRNA ligase beta subunit (688 aa).

Belongs to the class-II aminoacyl-tRNA synthetase family. In terms of assembly, tetramer of two alpha and two beta subunits.

It localises to the cytoplasm. The catalysed reaction is tRNA(Gly) + glycine + ATP = glycyl-tRNA(Gly) + AMP + diphosphate. The sequence is that of Glycine--tRNA ligase beta subunit from Listeria welshimeri serovar 6b (strain ATCC 35897 / DSM 20650 / CCUG 15529 / CIP 8149 / NCTC 11857 / SLCC 5334 / V8).